Consider the following 1706-residue polypeptide: Bifunctional hemolysin/adenylate cyclase (1706 aa).

An a, catalytic region spans residues 1 to 399 (MQQSHQAGYA…RRPSLGAVER (399 aa)). 349 to 356 (AYGVAGKS) provides a ligand contact to ATP. Residues 383–405 (VPASPGLRRPSLGAVERQDSGYD) form a disordered region. The tract at residues 400-912 (QDSGYDSLDG…LKHSIKLDVI (513 aa)) is b, Ala/Gly-rich. The segment at 500–698 (LSAAVFGLGE…SVVGAPVAVV (199 aa)) is required for interaction with CyaC. Residues lysine 860 and lysine 983 are each lipidated (N6-palmitoyl lysine). The segment at 913–1656 (GGDGDDVVLA…RDADHRVEII (744 aa)) is c. Hemolysin-type calcium-binding repeat units follow at residues 1014 to 1031 (IGGAGNDSITGNAHDNFL), 1032 to 1049 (AGGSGDDRLDGGAGNDTL), 1050 to 1067 (VGGEGQNTVIGGAGDDVF), 1155 to 1172 (WGHDGNDTIRGRGGDDIL), 1173 to 1190 (RGGLGLDTLYGEDGNDIF), 1279 to 1296 (MGQGGDDTVRGGDGDDLL), 1297 to 1314 (FGGDGNDMLYGDAGNDTL), 1315 to 1332 (YGGLGDDTLEGGAGNDWF), 1335 to 1352 (TQAREHDVLRGGDGVDTV), 1411 to 1428 (TGDAQANVLRGAGGADVL), 1429 to 1446 (AGGEGDDVLLGGDGDDQL), 1447 to 1464 (SGDAGRDRLYGEAGDDWF), 1468 to 1484 (AANAGNLLDGGDGRDTV), 1537 to 1554 (IGDAGANVLNGLAGNDVL), 1555 to 1572 (SGGAGDDVLLGDEGSDLL), 1573 to 1590 (SGDAGNDDLFGGQGDDTY), and 1603 to 1620 (ESGGGHDTIRINAGADQL). The interval 1657–1706 (HAANQAVDQAGIEKLVEAMAQYPDPGAAAAAPPAARVPDTLMQSLAVNWR) is d, Asp/Gly-rich.

This sequence in the N-terminal section; belongs to the adenylyl cyclase class-2 family. It in the C-terminal section; belongs to the RTX prokaryotic toxin family. In terms of processing, released in a processed form. Post-translationally, palmitoylated at Lys-860 and Lys-983 by CyaC. The toxin only becomes active when modified in position Lys-983: palmitoylation is required for efficient membrane insertion and pore formation of the acylated Hemolysin chain.

The protein resides in the secreted. It is found in the host cell membrane. The enzyme catalyses ATP = 3',5'-cyclic AMP + diphosphate. Activated by host calmodulin. Functionally, bifunctional adenylate cyclase toxin-hemolysin that plays a crucial role in host colonization. It causes whooping cough by acting on mammalian cells by elevating cAMP-concentration and thus disrupts normal cell function. In terms of biological role, adenylate cyclase that is activated by host intracellular calmodulin and catalyzes un-regulated conversion of ATP to cAMP, thereby impairing microbicidal functions of immune effector cells and inducing apoptosis of lung macrophages. Hemolysin that forms small cation-selective membrane channels, leading to hemolytic activity. The hemolytic activity of CyaA is weak compared with that of the HlyA of E.coli. This Bordetella pertussis (strain Tohama I / ATCC BAA-589 / NCTC 13251) protein is Bifunctional hemolysin/adenylate cyclase (cya).